The primary structure comprises 53 residues: Tryptophan RNA-binding attenuator protein inhibitory protein (53 aa).

CXXCXGXG motif repeat units follow at residues 12–19 (CPKCERAG) and 26–33 (CPACSGKG).

In terms of assembly, homopentamer or homohexamer.

The protein resides in the cytoplasm. Its function is as follows. By forming a complex with tryptophan-activated TRAP, and masking its RNA binding site, it inhibits TRAP's RNA binding ability, thereby abolishing TRAP regulation of gene expression, leading to antitermination and increased trp operon expression. AT acts by competing with messenger RNA for the RNA binding domain of TRAP. This Bacillus subtilis (strain 168) protein is Tryptophan RNA-binding attenuator protein inhibitory protein (rtpA).